The sequence spans 424 residues: CinA-like protein (424 aa).

This sequence belongs to the CinA family.

In Shewanella denitrificans (strain OS217 / ATCC BAA-1090 / DSM 15013), this protein is CinA-like protein.